The primary structure comprises 106 residues: MAEVTGFESELKTLLRTGKVVFGSKKTIKMVKTGKVKMVIIASTLRQDLKDDILAYAKISNIPVYQYNGSAYELGTLCGKPFMISTIGVIDPGESRLLEEIKEGAQ.

It belongs to the eukaryotic ribosomal protein eL30 family.

This chain is Large ribosomal subunit protein eL30 (rpl30e), found in Sulfurisphaera tokodaii (strain DSM 16993 / JCM 10545 / NBRC 100140 / 7) (Sulfolobus tokodaii).